The primary structure comprises 131 residues: Translation initiation factor 5A (131 aa).

Hypusine is present on lysine 36.

It belongs to the eIF-5A family.

The protein resides in the cytoplasm. Functionally, functions by promoting the formation of the first peptide bond. This chain is Translation initiation factor 5A, found in Sulfurisphaera tokodaii (strain DSM 16993 / JCM 10545 / NBRC 100140 / 7) (Sulfolobus tokodaii).